Here is a 78-residue protein sequence, read N- to C-terminus: Large ribosomal subunit protein bL28 (78 aa).

It belongs to the bacterial ribosomal protein bL28 family.

This is Large ribosomal subunit protein bL28 from Erwinia tasmaniensis (strain DSM 17950 / CFBP 7177 / CIP 109463 / NCPPB 4357 / Et1/99).